Reading from the N-terminus, the 117-residue chain is Envelope glycoprotein J (117 aa).

A signal peptide spans M1 to A26. Positions A26–E64 are disordered. Over residues T27–D40 the composition is skewed to polar residues. Topologically, residues T27 to D73 are extracellular. N36, N46, and N58 each carry an N-linked (GlcNAc...) asparagine; by host glycan. A helical transmembrane segment spans residues F74 to G94. Residues A95–A117 are Cytoplasmic-facing.

The protein belongs to the alphaherpesvirinae glycoprotein J family.

The protein resides in the host Golgi apparatus membrane. It localises to the host endoplasmic reticulum membrane. Its subcellular location is the host endosome membrane. Inhibits host cell apoptosis. Induces an increase in reactive oxygen species (ROS) in the host cell. This chain is Envelope glycoprotein J (gJ), found in Homo sapiens (Human).